A 90-amino-acid polypeptide reads, in one-letter code: MVKNAFISVRVQEKKEKNSGSVEFQVFRFTNTIRRLTSHLELHRKDYSSQRGLRKILEKRQRLLAYLSKKNRVRYKELISKLNIRESKNR.

This sequence belongs to the universal ribosomal protein uS15 family. In terms of assembly, part of the 30S ribosomal subunit.

Its subcellular location is the plastid. The protein localises to the chloroplast. This Citrus sinensis (Sweet orange) protein is Small ribosomal subunit protein uS15c (rps15).